The chain runs to 420 residues: UPF0053 protein HI_0107 (420 aa).

The CNNM transmembrane domain maps to Asp-2 to Pro-190. 4 consecutive transmembrane segments (helical) span residues Ser-3–Phe-23, Phe-65–Gly-85, Ala-92–Phe-112, and Phe-126–Met-146. 2 CBS domains span residues Met-208–Phe-268 and Leu-273–Ser-333.

It belongs to the UPF0053 family.

The protein resides in the cell membrane. The protein is UPF0053 protein HI_0107 of Haemophilus influenzae (strain ATCC 51907 / DSM 11121 / KW20 / Rd).